Here is a 129-residue protein sequence, read N- to C-terminus: Putative membrane protein insertion efficiency factor (129 aa).

The protein belongs to the UPF0161 family.

Its subcellular location is the cell inner membrane. In terms of biological role, could be involved in insertion of integral membrane proteins into the membrane. In Rhodopseudomonas palustris (strain TIE-1), this protein is Putative membrane protein insertion efficiency factor.